Consider the following 164-residue polypeptide: Phosphopantetheine adenylyltransferase (164 aa).

Serine 9 contacts substrate. Residues 9–10 (SF) and histidine 17 each bind ATP. Substrate contacts are provided by lysine 41, threonine 74, and arginine 88. ATP is bound by residues 89 to 91 (GVR), glutamate 99, and 124 to 130 (NSFVASS).

The protein belongs to the bacterial CoaD family. In terms of assembly, homohexamer. Mg(2+) is required as a cofactor.

The protein localises to the cytoplasm. It carries out the reaction (R)-4'-phosphopantetheine + ATP + H(+) = 3'-dephospho-CoA + diphosphate. Its pathway is cofactor biosynthesis; coenzyme A biosynthesis; CoA from (R)-pantothenate: step 4/5. Reversibly transfers an adenylyl group from ATP to 4'-phosphopantetheine, yielding dephospho-CoA (dPCoA) and pyrophosphate. This chain is Phosphopantetheine adenylyltransferase, found in Lactobacillus helveticus (strain DPC 4571).